A 675-amino-acid chain; its full sequence is Collagen alpha-3(IX) chain (675 aa).

The N-terminal stretch at 1 to 21 (MTVFPTLGLLFLCQLLATTSA) is a signal peptide. Disordered stretches follow at residues 22-517 (QRVG…KEAS) and 542-660 (KPLS…ICDT). The tract at residues 25 to 515 (GPQGPPGPRG…TGKPGPPGKE (491 aa)) is triple-helical region 3 (COL3). 2 stretches are compositionally biased toward pro residues: residues 27–38 (QGPPGPRGPPGP) and 51–60 (SGLPGPPGPK). Positions 62 to 87 (APGKPGAAGEAGLPGLPGVDGLTGTD) are enriched in low complexity. A compositionally biased stretch (pro residues) spans 105-125 (AGPPGPAGKGLPGPPGPPGPS). The span at 126-135 (GLPGGNGFRG) shows a compositional bias: gly residues. Composition is skewed to pro residues over residues 136-155 (PPGP…PGPP) and 173-184 (LCPPGPPGPPGM). A compositionally biased stretch (low complexity) spans 218-233 (PGSVGLQGPRGLRGLP). A Cell attachment site motif is present at residues 242 to 244 (RGD). Positions 301 to 317 (KDGRDGAPGLDGEKGDA) are enriched in basic and acidic residues. A compositionally biased stretch (low complexity) spans 361–374 (EPGIPGDVGIPGDR). An N-linked (GlcNAc...) asparagine glycan is attached at Asn-479. Over residues 481 to 508 (TAGAPGIPGHPGPMGHQGEQGVPGITGK) the composition is skewed to low complexity. The tract at residues 516 to 546 (ASEQHIRELCGEMINDQIAQLAANLRKPLSP) is nonhelical region 3 (NC3). Residues 547-626 (GMTGRPGPAG…QGLPGVPGIS (80 aa)) are triple-helical region 2 (COL2). A compositionally biased stretch (low complexity) spans 569–582 (HPGARGPPGYRGPT). The short motif at 591 to 593 (RGD) is the Cell attachment site element. Low complexity predominate over residues 613 to 624 (DQGPQGLPGVPG). Residues 627–631 (KNGRD) form a nonhelical region 2 (NC2) region. The triple-helical region 1 (COL1) stretch occupies residues 632-658 (GAQGEPGLPGDPGTPGAVGAQGTPGIC). The interval 659–675 (DTSACMGAVGASTSKKS) is nonhelical region 1 (NC1).

It belongs to the fibril-associated collagens with interrupted helices (FACIT) family. Trimers composed of three different chains: alpha 1(IX), alpha 2(IX), and alpha 3(IX). Prolines at the third position of the tripeptide repeating unit (G-X-Y) are hydroxylated in some or all of the chains.

It is found in the secreted. The protein resides in the extracellular space. Its subcellular location is the extracellular matrix. Functionally, collagen type IX is a minor cartilage non-fibrillar collagen. It is associated with type II collagen fibrils. This chain is Collagen alpha-3(IX) chain (COL9A3), found in Gallus gallus (Chicken).